Consider the following 292-residue polypeptide: ATP synthase gamma chain (292 aa).

This sequence belongs to the ATPase gamma chain family. In terms of assembly, F-type ATPases have 2 components, CF(1) - the catalytic core - and CF(0) - the membrane proton channel. CF(1) has five subunits: alpha(3), beta(3), gamma(1), delta(1), epsilon(1). CF(0) has three main subunits: a, b and c.

The protein resides in the cell inner membrane. In terms of biological role, produces ATP from ADP in the presence of a proton gradient across the membrane. The gamma chain is believed to be important in regulating ATPase activity and the flow of protons through the CF(0) complex. The sequence is that of ATP synthase gamma chain from Maridesulfovibrio salexigens (strain ATCC 14822 / DSM 2638 / NCIMB 8403 / VKM B-1763) (Desulfovibrio salexigens).